We begin with the raw amino-acid sequence, 130 residues long: Classical arabinogalactan protein 7 (130 aa).

Positions 1-21 (MNSKIIEAFFIVALFTTSCLA) are cleaved as a signal peptide. Gln-22 bears the Pyrrolidone carboxylic acid mark. The segment at 22–108 (QAPAPSPTTT…DASAPPPNAA (87 aa)) is disordered. Pro-24, Pro-26, Pro-28, Pro-35, and Pro-36 each carry 4-hydroxyproline. 5 O-linked (Ara...) hydroxyproline glycosylation sites follow: Pro-24, Pro-26, Pro-28, Pro-35, and Pro-36. The span at 33–68 (TPPPVATPPPAATPAPTTTPPPAVSPAPTSSPPSSA) shows a compositional bias: pro residues. A lipid anchor (GPI-anchor amidated asparagine) is attached at Asn-106. A propeptide spans 107–130 (AALTNKAFVVGSLVAAIIYAVVLA) (removed in mature form).

This sequence belongs to the classical AGP family. In terms of processing, O-glycosylated on hydroxyprolines; noncontiguous hydroxylproline residues are glycosylated with arabinogalactan.

It localises to the cell membrane. Its function is as follows. Proteoglycan that seems to be implicated in diverse developmental roles such as differentiation, cell-cell recognition, embryogenesis and programmed cell death. In Arabidopsis thaliana (Mouse-ear cress), this protein is Classical arabinogalactan protein 7 (AGP7).